A 756-amino-acid chain; its full sequence is DNA mismatch repair protein Mlh1 (756 aa).

S2 carries the N-acetylserine modification. K33 is subject to N6-acetyllysine. Residues N38, D63, 82-84 (TSK), and 100-104 (RGEAL) each bind ATP. K241 and K361 each carry N6-acetyllysine. Disordered regions lie at residues 355–378 (PSGEMVKSTTSLTSSSTSGSSDKV) and 400–491 (LSKP…KEMT). The segment covering 362-375 (STTSLTSSSTSGSS) has biased composition (low complexity). K377 carries the N6-acetyllysine modification. An interaction with EXO1 region spans residues 410–650 (AIVTEDKTDI…LLIDNYVPPL (241 aa)). Over residues 443–457 (KNQSLEGDTTKGTSE) the composition is skewed to polar residues. A Nuclear localization signal motif is present at residues 471–474 (KRHR). The residue at position 477 (S477) is a Phosphoserine.

It belongs to the DNA mismatch repair MutL/HexB family. In terms of assembly, component of the DNA mismatch repair (MMR) complex composed at least of MSH2, MSH3, MSH6, PMS1 and MLH1. Heterodimer of MLH1 and PMS2 (MutL alpha), MLH1 and PMS1 (MutL beta) or MLH1 and MLH3 (MutL gamma). Forms a ternary complex with MutS alpha (MSH2-MSH6) or MutS beta (MSH2-MSH3). Part of the BRCA1-associated genome surveillance complex (BASC), which contains BRCA1, MSH2, MSH6, MLH1, ATM, BLM, PMS2 and the RAD50-MRE11-NBS1 protein complex. This association could be a dynamic process changing throughout the cell cycle and within subnuclear domains. Interacts with MCM9; the interaction recruits MLH1 to chromatin. Interacts with MCM8. Interacts with PMS2; this interaction promotes MLH1 stability. Interacts with MBD4. Interacts with EXO1. Interacts with MTMR15/FAN1. Post-translationally, acetylated. Deacetylated by HDAC6 which prevents the MutL alpha complex, formed by the MLH1-PMS2 heterodimer, from being recruited to the MutS alpha complex, formed by the MSH2-MSH6 heterodimer, leading to tolerance of DNA damage. In terms of processing, ubiquitinated by UBR4; leading to proteasomal degradation. This ubiquitination is counteracted by the deubiquitinase USP5. In terms of tissue distribution, colon, lymphocytes, breast, lung, spleen, testis, prostate, thyroid, gall bladder and heart.

The protein resides in the nucleus. The protein localises to the chromosome. Its function is as follows. Heterodimerizes with PMS2 to form MutL alpha, a component of the post-replicative DNA mismatch repair system (MMR). DNA repair is initiated by MutS alpha (MSH2-MSH6) or MutS beta (MSH2-MSH3) binding to a dsDNA mismatch, then MutL alpha is recruited to the heteroduplex. Assembly of the MutL-MutS-heteroduplex ternary complex in presence of RFC and PCNA is sufficient to activate endonuclease activity of PMS2. It introduces single-strand breaks near the mismatch and thus generates new entry points for the exonuclease EXO1 to degrade the strand containing the mismatch. DNA methylation would prevent cleavage and therefore assure that only the newly mutated DNA strand is going to be corrected. MutL alpha (MLH1-PMS2) interacts physically with the clamp loader subunits of DNA polymerase III, suggesting that it may play a role to recruit the DNA polymerase III to the site of the MMR. Also implicated in DNA damage signaling, a process which induces cell cycle arrest and can lead to apoptosis in case of major DNA damages. Heterodimerizes with MLH3 to form MutL gamma which plays a role in meiosis. The sequence is that of DNA mismatch repair protein Mlh1 (MLH1) from Homo sapiens (Human).